A 903-amino-acid chain; its full sequence is Protein translocase subunit SecA (903 aa).

ATP-binding positions include glutamine 87, glycine 105 to threonine 109, and aspartate 512. Residues lysine 853–serine 903 form a disordered region. Zn(2+) is bound by residues cysteine 886, cysteine 888, cysteine 897, and histidine 898. Over residues lysine 892–serine 903 the composition is skewed to basic residues.

The protein belongs to the SecA family. In terms of assembly, monomer and homodimer. Part of the essential Sec protein translocation apparatus which comprises SecA, SecYEG and auxiliary proteins SecDF-YajC and YidC. The cofactor is Zn(2+).

It is found in the cell inner membrane. The protein resides in the cytoplasm. It catalyses the reaction ATP + H2O + cellular proteinSide 1 = ADP + phosphate + cellular proteinSide 2.. In terms of biological role, part of the Sec protein translocase complex. Interacts with the SecYEG preprotein conducting channel. Has a central role in coupling the hydrolysis of ATP to the transfer of proteins into and across the cell membrane, serving both as a receptor for the preprotein-SecB complex and as an ATP-driven molecular motor driving the stepwise translocation of polypeptide chains across the membrane. The polypeptide is Protein translocase subunit SecA (Serratia proteamaculans (strain 568)).